The chain runs to 190 residues: Potassium-transporting ATPase KdpC subunit (190 aa).

Residues 9-29 (VMFILFTIICGGIYPSVVTGI) form a helical membrane-spanning segment.

The protein belongs to the KdpC family. In terms of assembly, the system is composed of three essential subunits: KdpA, KdpB and KdpC.

Its subcellular location is the cell inner membrane. Functionally, part of the high-affinity ATP-driven potassium transport (or Kdp) system, which catalyzes the hydrolysis of ATP coupled with the electrogenic transport of potassium into the cytoplasm. This subunit acts as a catalytic chaperone that increases the ATP-binding affinity of the ATP-hydrolyzing subunit KdpB by the formation of a transient KdpB/KdpC/ATP ternary complex. The protein is Potassium-transporting ATPase KdpC subunit of Citrifermentans bemidjiense (strain ATCC BAA-1014 / DSM 16622 / JCM 12645 / Bem) (Geobacter bemidjiensis).